Reading from the N-terminus, the 829-residue chain is Transmembrane protease serine 7 (829 aa).

The Cytoplasmic segment spans residues 1 to 62 (MDKEKSDPSC…RAPFWNVQNK (62 aa)). A disordered region spans residues 26-52 (SVPGKLPGRRPPRKPIGKPRPRKQPKK). Positions 32–52 (PGRRPPRKPIGKPRPRKQPKK) are enriched in basic residues. Residues 63–83 (IILFTVFLFILAVTAWTLLWL) form a helical; Signal-anchor for type II membrane protein membrane-spanning segment. Over 84-829 (YISKTESKDA…WIHKYVPSLL (746 aa)) the chain is Extracellular. The 129-residue stretch at 92 to 220 (DAFYFVGMFR…DSVVLNAGLR (129 aa)) folds into the SEA domain. Cystine bridges form between Cys233/Cys259, Cys285/Cys308, and Cys351/Cys382. CUB domains are found at residues 233-346 (CSRY…FEVI) and 351-467 (CEST…YNIS). 2 N-linked (GlcNAc...) asparagine glycosylation sites follow: Asn401 and Asn465. 3 consecutive LDL-receptor class A domains span residues 469-505 (PCPAGSFRCSSGLCVPQAQRCDGVNDCFDESDELFCV), 503-540 (FCVTVKPACNSSSFRQHGPLVCDGFRDCEDGQDEQNCT), and 544-581 (PCTSRTFKCGNDICFRKQNAQCDGIVDCPDGSDEEGCG). Intrachain disulfides connect Cys470–Cys482, Cys477–Cys495, Cys489–Cys504, Cys511–Cys530, Cys524–Cys539, Cys545–Cys557, Cys552–Cys571, Cys565–Cys580, and Cys617–Cys633. The Peptidase S1 domain maps to 592-826 (IVGGSDSQEG…FVPWIHKYVP (235 aa)). Active-site charge relay system residues include His632 and Asp680. Cystine bridges form between Cys716-Cys782, Cys748-Cys761, and Cys772-Cys802. The active-site Charge relay system is Ser776.

The protein belongs to the peptidase S1 family. As to quaternary structure, forms a heterodimer with SERPINA5. In terms of processing, N-glycosylated. As to expression, expressed in brain, eye, testis, skin, epididymis and salivary gland with lower levels in heart, skeletal muscle, thymus, ovary, prostate and uterus.

It localises to the cell membrane. Serine protease which preferentially hydrolyzes peptides with Arg at the P1 position. The polypeptide is Transmembrane protease serine 7 (Tmprss7) (Mus musculus (Mouse)).